The following is a 172-amino-acid chain: Xanthine-guanine phosphoribosyltransferase (172 aa).

5-phospho-alpha-D-ribose 1-diphosphate is bound by residues 47–48 (RG) and 106–114 (DDLVDTGKT). D107 contributes to the Mg(2+) binding site. Positions 110 and 153 each coordinate guanine. The xanthine site is built by D110 and I153. Residues 110–114 (DTGKT) and 152–153 (WI) each bind GMP.

This sequence belongs to the purine/pyrimidine phosphoribosyltransferase family. XGPT subfamily. Homotetramer. Mg(2+) is required as a cofactor.

It localises to the cell inner membrane. It catalyses the reaction GMP + diphosphate = guanine + 5-phospho-alpha-D-ribose 1-diphosphate. The catalysed reaction is XMP + diphosphate = xanthine + 5-phospho-alpha-D-ribose 1-diphosphate. It carries out the reaction IMP + diphosphate = hypoxanthine + 5-phospho-alpha-D-ribose 1-diphosphate. It functions in the pathway purine metabolism; GMP biosynthesis via salvage pathway; GMP from guanine: step 1/1. It participates in purine metabolism; XMP biosynthesis via salvage pathway; XMP from xanthine: step 1/1. In terms of biological role, purine salvage pathway enzyme that catalyzes the transfer of the ribosyl-5-phosphate group from 5-phospho-alpha-D-ribose 1-diphosphate (PRPP) to the N9 position of the 6-oxopurines guanine and xanthine to form the corresponding ribonucleotides GMP (guanosine 5'-monophosphate) and XMP (xanthosine 5'-monophosphate), with the release of PPi. To a lesser extent, also acts on hypoxanthine. The protein is Xanthine-guanine phosphoribosyltransferase of Rhodopseudomonas palustris (strain HaA2).